The sequence spans 113 residues: Signal peptidase complex subunit 1 (113 aa).

Over 1–32 (MDGMIAMLPAPLQQLSSHIDFQGQKVAERTYQ) the chain is Cytoplasmic. A helical membrane pass occupies residues 33 to 53 (VILTLAGIIGFFVGYSTQQLS). Residues 54 to 57 (YAMY) lie on the Lumenal side of the membrane. A helical membrane pass occupies residues 58–78 (TVMGAAVFTALIILPPWPFLF). Residues 79 to 113 (RKNPIVWQTPIEEQEASSSSDNEKKDKKKETKKTK) lie on the Cytoplasmic side of the membrane. The tract at residues 89-113 (IEEQEASSSSDNEKKDKKKETKKTK) is disordered.

It belongs to the SPCS1 family. As to quaternary structure, component of the signal peptidase complex (SPC) composed of a catalytic subunit sec-11 and three accessory subunits spcs-1, spcs-2 and spcs-3. The complex induces a local thinning of the ER membrane which is used to measure the length of the signal peptide (SP) h-region of protein substrates. This ensures the selectivity of the complex towards h-regions shorter than 18-20 amino acids.

It localises to the endoplasmic reticulum membrane. Its function is as follows. Component of the signal peptidase complex (SPC) which catalyzes the cleavage of N-terminal signal sequences from nascent proteins as they are translocated into the lumen of the endoplasmic reticulum. Dispensable for SPC enzymatic activity. In Caenorhabditis briggsae, this protein is Signal peptidase complex subunit 1.